Here is a 285-residue protein sequence, read N- to C-terminus: Bifunctional protein FolD (285 aa).

NADP(+) contacts are provided by residues 166 to 168 (GAS) and Ile-232.

The protein belongs to the tetrahydrofolate dehydrogenase/cyclohydrolase family. Homodimer.

The enzyme catalyses (6R)-5,10-methylene-5,6,7,8-tetrahydrofolate + NADP(+) = (6R)-5,10-methenyltetrahydrofolate + NADPH. It catalyses the reaction (6R)-5,10-methenyltetrahydrofolate + H2O = (6R)-10-formyltetrahydrofolate + H(+). The protein operates within one-carbon metabolism; tetrahydrofolate interconversion. Catalyzes the oxidation of 5,10-methylenetetrahydrofolate to 5,10-methenyltetrahydrofolate and then the hydrolysis of 5,10-methenyltetrahydrofolate to 10-formyltetrahydrofolate. This Buchnera aphidicola subsp. Schizaphis graminum (strain Sg) protein is Bifunctional protein FolD.